Consider the following 668-residue polypeptide: DNA ligase (668 aa).

NAD(+) contacts are provided by residues 31 to 35, 80 to 81, and Glu112; these read DAEYD and SL. The active-site N6-AMP-lysine intermediate is the Lys114. Residues Arg135, Glu172, Lys289, and Lys313 each contribute to the NAD(+) site. Zn(2+) contacts are provided by Cys407, Cys410, Cys425, and Cys431. One can recognise a BRCT domain in the interval 591-668; it reads SVPQPLAGKV…NEEQLIELLN (78 aa).

This sequence belongs to the NAD-dependent DNA ligase family. LigA subfamily. It depends on Mg(2+) as a cofactor. Mn(2+) serves as cofactor.

It catalyses the reaction NAD(+) + (deoxyribonucleotide)n-3'-hydroxyl + 5'-phospho-(deoxyribonucleotide)m = (deoxyribonucleotide)n+m + AMP + beta-nicotinamide D-nucleotide.. Its function is as follows. DNA ligase that catalyzes the formation of phosphodiester linkages between 5'-phosphoryl and 3'-hydroxyl groups in double-stranded DNA using NAD as a coenzyme and as the energy source for the reaction. It is essential for DNA replication and repair of damaged DNA. The polypeptide is DNA ligase (Aliivibrio fischeri (strain ATCC 700601 / ES114) (Vibrio fischeri)).